A 307-amino-acid polypeptide reads, in one-letter code: Ribosomal RNA large subunit methyltransferase F (307 aa).

This sequence belongs to the methyltransferase superfamily. METTL16/RlmF family.

It is found in the cytoplasm. The enzyme catalyses adenosine(1618) in 23S rRNA + S-adenosyl-L-methionine = N(6)-methyladenosine(1618) in 23S rRNA + S-adenosyl-L-homocysteine + H(+). Its function is as follows. Specifically methylates the adenine in position 1618 of 23S rRNA. This is Ribosomal RNA large subunit methyltransferase F from Bacteroides thetaiotaomicron (strain ATCC 29148 / DSM 2079 / JCM 5827 / CCUG 10774 / NCTC 10582 / VPI-5482 / E50).